The chain runs to 219 residues: N-(5'-phosphoribosyl)anthranilate isomerase (219 aa).

It belongs to the TrpF family.

It carries out the reaction N-(5-phospho-beta-D-ribosyl)anthranilate = 1-(2-carboxyphenylamino)-1-deoxy-D-ribulose 5-phosphate. Its pathway is amino-acid biosynthesis; L-tryptophan biosynthesis; L-tryptophan from chorismate: step 3/5. The protein is N-(5'-phosphoribosyl)anthranilate isomerase of Bradyrhizobium sp. (strain ORS 278).